The primary structure comprises 495 residues: REST corepressor 3 (495 aa).

The ELM2 domain maps to 1–83; sequence MRVGAEYQAR…KSLADLPNFT (83 aa). A Glycyl lysine isopeptide (Lys-Gly) (interchain with G-Cter in SUMO2) cross-link involves residue Lys-20. Residues 84 to 135 enclose the SANT 1 domain; sequence PFPDEWTVEDKVLFEQAFSFHGKSFHRIQQMLPDKTIASLVKYYYSWKKTRS. A disordered region spans residues 147–219; the sequence is LANRHNQGDS…SQRSKCRPPK (73 aa). Phosphoserine occurs at positions 156 and 171. Residues 162–184 are compositionally biased toward basic and acidic residues; it reads ETHPMDGNDSDYDPKKEAKKEGN. A Glycyl lysine isopeptide (Lys-Gly) (interchain with G-Cter in SUMO2) cross-link involves residue Lys-193. Residues 205-217 are compositionally biased toward basic residues; it reads QHRHHSQRSKCRP. The stretch at 237–273 forms a coiled coil; that stretch reads AANTILRQLDMELISLKRQVQNAKQVNSALKQKMEGG. Residue Lys-285 forms a Glycyl lysine isopeptide (Lys-Gly) (interchain with G-Cter in SUMO2) linkage. Residues 285–336 form the SANT 2 domain; the sequence is KINARWTTEEQLLAVQGVRKYGKDFQAIADVIGNKTVGQVKNFFVNYRRRFN. Residues 346–495 are disordered; the sequence is AEQGTQASNG…IQTDSQSSLH (150 aa). Residues 348 to 357 show a composition bias toward polar residues; it reads QGTQASNGDA. Thr-376 carries the phosphothreonine modification. Residues 393–405 show a composition bias toward pro residues; the sequence is PSPPAPSSTPTPT. The segment covering 419 to 428 has biased composition (low complexity); it reads RPTLPAAPAL. 2 positions are modified to asymmetric dimethylarginine: Arg-445 and Arg-457. The span at 475–495 shows a compositional bias: polar residues; it reads VGGQQPPSLIGIQTDSQSSLH.

This sequence belongs to the CoREST family.

It is found in the nucleus. Functionally, may act as a component of a corepressor complex that represses transcription. This Homo sapiens (Human) protein is REST corepressor 3 (RCOR3).